Here is a 272-residue protein sequence, read N- to C-terminus: Auxin-responsive protein IAA5 (272 aa).

The interval 1–92 (MSPPLEPHDY…DSSPRHGASS (92 aa)) is disordered. Composition is skewed to low complexity over residues 14–33 (SAAA…SPNP) and 40–50 (PRLTLRLGLPG). The short motif at 44–48 (LRLGL) is the EAR-like (transcriptional repression) element. One can recognise a PB1 domain in the interval 152-256 (PLYVKVSMDG…RKLKIMRGSD (105 aa)).

Belongs to the Aux/IAA family. Homodimers and heterodimers. In terms of tissue distribution, highly expressed in roots and flowers. Expressed in shoots.

It is found in the nucleus. Functionally, aux/IAA proteins are short-lived transcriptional factors that function as repressors of early auxin response genes at low auxin concentrations. The chain is Auxin-responsive protein IAA5 (IAA5) from Oryza sativa subsp. indica (Rice).